A 302-amino-acid polypeptide reads, in one-letter code: Recombination-associated protein RdgC (302 aa).

It belongs to the RdgC family.

The protein localises to the cytoplasm. It localises to the nucleoid. May be involved in recombination. In Halorhodospira halophila (strain DSM 244 / SL1) (Ectothiorhodospira halophila (strain DSM 244 / SL1)), this protein is Recombination-associated protein RdgC.